A 364-amino-acid polypeptide reads, in one-letter code: Zinc finger protein 474 (364 aa).

The segment covering 1 to 10 (MERGKKKRIS) has biased composition (basic residues). Disordered regions lie at residues 1–21 (MERG…HHSK) and 37–60 (SYSS…DTQK). The segment at 93 to 122 (GFRVCYICGREFGSQSIAIHEPQCLQKWHI) adopts a C2HC/C3H-type 1 zinc-finger fold. The Zn(2+) site is built by C97, C100, H112, and C116. The tract at residues 127-147 (LPKHLRRPEPSKPQSLSSSGS) is disordered. The span at 138–147 (KPQSLSSSGS) shows a compositional bias: low complexity. 3 C2HC/C3H-type zinc fingers span residues 164 to 193 (QLLP…KGEG), 220 to 249 (RTVI…KWKM), and 283 to 312 (QLVF…HPYG). The Zn(2+) site is built by C168, C171, H183, C187, C224, C227, H239, C243, C287, C290, H302, and C306. Positions 187–214 (CKPKGEGPRAPHSNSSDHLTGLKKACSG) are disordered.

The cofactor is Zn(2+).

This chain is Zinc finger protein 474 (ZNF474), found in Homo sapiens (Human).